We begin with the raw amino-acid sequence, 598 residues long: 2-succinyl-5-enolpyruvyl-6-hydroxy-3-cyclohexene-1-carboxylate synthase (598 aa).

It belongs to the TPP enzyme family. MenD subfamily. In terms of assembly, homodimer. Mg(2+) serves as cofactor. The cofactor is Mn(2+). Requires thiamine diphosphate as cofactor.

The enzyme catalyses isochorismate + 2-oxoglutarate + H(+) = 5-enolpyruvoyl-6-hydroxy-2-succinyl-cyclohex-3-ene-1-carboxylate + CO2. It functions in the pathway quinol/quinone metabolism; 1,4-dihydroxy-2-naphthoate biosynthesis; 1,4-dihydroxy-2-naphthoate from chorismate: step 2/7. It participates in cofactor biosynthesis; phylloquinone biosynthesis. Its function is as follows. Catalyzes the thiamine diphosphate-dependent decarboxylation of 2-oxoglutarate and the subsequent addition of the resulting succinic semialdehyde-thiamine pyrophosphate anion to isochorismate to yield 2-succinyl-5-enolpyruvyl-6-hydroxy-3-cyclohexene-1-carboxylate (SEPHCHC). In Prochlorococcus marinus (strain NATL2A), this protein is 2-succinyl-5-enolpyruvyl-6-hydroxy-3-cyclohexene-1-carboxylate synthase.